The primary structure comprises 227 residues: Testis expressed protein 56 (227 aa).

As to expression, expressed predominantly in the testis.

The sequence is that of Testis expressed protein 56 from Mus musculus (Mouse).